A 313-amino-acid polypeptide reads, in one-letter code: Mas-related G-protein coupled receptor member A4 (313 aa).

At 1 to 25 (MAPTTTNPMNETIPGSIDIETLIPN) the chain is on the extracellular side. N-linked (GlcNAc...) asparagine glycosylation occurs at Asn-10. The chain crosses the membrane as a helical span at residues 26-46 (LMIIIFGLVGLTGNVILFWLL). Over 47–54 (GFHLHRNA) the chain is Cytoplasmic. A helical transmembrane segment spans residues 55–75 (FLVYILNLALADFLFLLCHII). An N-linked (GlcNAc...) asparagine glycan is attached at Asn-76. Over 76 to 93 (NSTMLLLKVHLPNNILNH) the chain is Extracellular. The helical transmembrane segment at 94-114 (CFDIIMTVLYITGLSMLSAIS) threads the bilayer. The Cytoplasmic portion of the chain corresponds to 115-137 (TERCLSVLCPIWYRCRRPEHTST). Residues 138–158 (VLCAVIWFLPLLICILNGYFC) traverse the membrane as a helical segment. Residues 159 to 182 (HFFGPKYVIDSVCLATNFFIRTYP) are Extracellular-facing. The chain crosses the membrane as a helical span at residues 183–203 (MFLFIVLCLSTLALLARLFCG). Residues 204-219 (AGKTKFTRLFVTIMLT) lie on the Cytoplasmic side of the membrane. A helical membrane pass occupies residues 220-240 (VLVFLLCGLPLGFFWFLVPWI). At 241–255 (NRDFSVLDYILFQTS) the chain is on the extracellular side. The chain crosses the membrane as a helical span at residues 256-276 (LVLTSVNSCANPIIYFFVGSF). Residues 277-313 (RHRLKHKTLKMVLQSALQDTPETPENMVEMSRSKAEP) lie on the Cytoplasmic side of the membrane.

It belongs to the G-protein coupled receptor 1 family. Mas subfamily. In terms of tissue distribution, expressed in a subset of sensory neurons that includes nociceptors. Expressed in the subclass of non-peptidergic sensory neurons that are IB4(+) and VR1(-).

The protein resides in the cell membrane. Functionally, orphan receptor. May be a receptor for RFamide-family neuropeptides such as NPFF and NPAF, which are analgesic in vivo. May regulate nociceptor function and/or development, including the sensation or modulation of pain. The polypeptide is Mas-related G-protein coupled receptor member A4 (Mrgpra4) (Mus musculus (Mouse)).